The chain runs to 29 residues: 28 kDa protein (29 aa).

The protein is 28 kDa protein of Tritrichomonas foetus (Trichomonas foetus).